A 132-amino-acid chain; its full sequence is MSKTMIEKVDEVLETEVCAADQKMINLFGRLNNRKHELMREKKAKQEDLEKATDSQDDLFIADDDSKFKYSMGEAFLEVNKEDAESLIEKYINKLEEDIKKIDSDINDINEKHKELKVILYAKFKNSINLEE.

The protein belongs to the prefoldin subunit beta family. In terms of assembly, heterohexamer of two PFD-alpha type and four PFD-beta type subunits.

Its function is as follows. Binds specifically to cytosolic chaperonin (c-CPN) and transfers target proteins to it. Binds to nascent polypeptide chain and promotes folding in an environment in which there are many competing pathways for nonnative proteins. This chain is Probable prefoldin subunit 4 (pfdn4), found in Dictyostelium discoideum (Social amoeba).